The chain runs to 285 residues: 2-dehydro-3-deoxyphosphooctonate aldolase (285 aa).

It belongs to the KdsA family.

The protein resides in the cytoplasm. It catalyses the reaction D-arabinose 5-phosphate + phosphoenolpyruvate + H2O = 3-deoxy-alpha-D-manno-2-octulosonate-8-phosphate + phosphate. Its pathway is carbohydrate biosynthesis; 3-deoxy-D-manno-octulosonate biosynthesis; 3-deoxy-D-manno-octulosonate from D-ribulose 5-phosphate: step 2/3. It functions in the pathway bacterial outer membrane biogenesis; lipopolysaccharide biosynthesis. In Albidiferax ferrireducens (strain ATCC BAA-621 / DSM 15236 / T118) (Rhodoferax ferrireducens), this protein is 2-dehydro-3-deoxyphosphooctonate aldolase.